Reading from the N-terminus, the 169-residue chain is Sec-independent protein translocase protein TatB (169 aa).

A helical membrane pass occupies residues 2–22 (SPGIGMPELLVVLVLALVVVG). The interval 106-169 (NQAETDADKA…AKPVDEIKGR (64 aa)) is disordered.

Belongs to the TatB family. As to quaternary structure, the Tat system comprises two distinct complexes: a TatABC complex, containing multiple copies of TatA, TatB and TatC subunits, and a separate TatA complex, containing only TatA subunits. Substrates initially bind to the TatABC complex, which probably triggers association of the separate TatA complex to form the active translocon.

Its subcellular location is the cell inner membrane. Its function is as follows. Part of the twin-arginine translocation (Tat) system that transports large folded proteins containing a characteristic twin-arginine motif in their signal peptide across membranes. Together with TatC, TatB is part of a receptor directly interacting with Tat signal peptides. TatB may form an oligomeric binding site that transiently accommodates folded Tat precursor proteins before their translocation. The sequence is that of Sec-independent protein translocase protein TatB from Maricaulis maris (strain MCS10) (Caulobacter maris).